The following is a 227-amino-acid chain: MEKLFNENEGMPSNQGKIDNEEQPPHEGKPEVACILEDKKLENEGNTENTGKRVEEPLKDKEKPESAGKAKGEGKSERKGKSEMQGGSKTEGKPERGGRAEGEGEPDSEREPESEGEPESETRAAGKRPAEDDIPRKAKRKTNKGLAQYLKQYKEAIHDMNFSNEDMIREFDNMARVEDKRRKSKQKLGAFLWMQRNLQDPFYPRGPREFRGGCRAPRRDTEDIPYV.

Disordered regions lie at residues 1 to 145 (MEKL…TNKG) and 202 to 227 (FYPR…IPYV). Basic and acidic residues-rich tracts occupy residues 18 to 43 (IDNE…KLEN), 50 to 82 (TGKR…KGKS), 90 to 113 (TEGK…REPE), 120 to 136 (SETR…DIPR), and 206 to 227 (GPRE…IPYV).

The protein belongs to the TFS-II family. TFA subfamily.

The protein localises to the nucleus. Its function is as follows. May be involved in transcriptional regulation. This chain is Transcription elongation factor A protein-like 2 (TCEAL2), found in Homo sapiens (Human).